A 182-amino-acid chain; its full sequence is Adenine phosphoribosyltransferase (182 aa).

Belongs to the purine/pyrimidine phosphoribosyltransferase family. As to quaternary structure, homodimer.

It localises to the cytoplasm. It catalyses the reaction AMP + diphosphate = 5-phospho-alpha-D-ribose 1-diphosphate + adenine. It participates in purine metabolism; AMP biosynthesis via salvage pathway; AMP from adenine: step 1/1. Its function is as follows. Catalyzes a salvage reaction resulting in the formation of AMP, that is energically less costly than de novo synthesis. The sequence is that of Adenine phosphoribosyltransferase from Stutzerimonas stutzeri (strain A1501) (Pseudomonas stutzeri).